Here is an 800-residue protein sequence, read N- to C-terminus: DNA topoisomerase 4 subunit A (800 aa).

Residues 31-495 (LPDVRDGLKP…EIEEIKIDKE (465 aa)) enclose the Topo IIA-type catalytic domain. Tyr119 serves as the catalytic O-(5'-phospho-DNA)-tyrosine intermediate.

The protein belongs to the type II topoisomerase GyrA/ParC subunit family. ParC type 2 subfamily. As to quaternary structure, heterotetramer composed of ParC and ParE.

The protein localises to the cell membrane. The enzyme catalyses ATP-dependent breakage, passage and rejoining of double-stranded DNA.. Topoisomerase IV is essential for chromosome segregation. It relaxes supercoiled DNA. Performs the decatenation events required during the replication of a circular DNA molecule. This chain is DNA topoisomerase 4 subunit A, found in Staphylococcus aureus (strain NCTC 8325 / PS 47).